The primary structure comprises 222 residues: Ribonuclease 3 (222 aa).

Positions 5 to 127 (PIKLEKKLKL…LIGAIYLDKG (123 aa)) constitute an RNase III domain. E41 provides a ligand contact to Mg(2+). Residue D45 is part of the active site. Residues D113 and E116 each coordinate Mg(2+). Residue E116 is part of the active site. Residues 152–221 (DAKTKLQEYS…ASLCLQDIFK (70 aa)) form the DRBM domain.

It belongs to the ribonuclease III family. Homodimer. The cofactor is Mg(2+).

The protein resides in the cytoplasm. It catalyses the reaction Endonucleolytic cleavage to 5'-phosphomonoester.. In terms of biological role, digests double-stranded RNA. Involved in the processing of primary rRNA transcript to yield the immediate precursors to the large and small rRNAs (23S and 16S). Processes some mRNAs, and tRNAs when they are encoded in the rRNA operon. Processes pre-crRNA and tracrRNA of type II CRISPR loci if present in the organism. This is Ribonuclease 3 from Pelagibacter ubique (strain HTCC1062).